Here is a 336-residue protein sequence, read N- to C-terminus: Ketol-acid reductoisomerase (NADP(+)) (336 aa).

In terms of domain architecture, KARI N-terminal Rossmann spans 1–182 (MAVIYYDKDA…GVTRAGVIET (182 aa)). NADP(+) is bound by residues 25 to 28 (YGSQ), Arg48, Ser51, Ser53, and 83 to 86 (DEHQ). The active site involves His108. Gly134 is an NADP(+) binding site. Residues 183 to 328 (TFKEETETDL…KELRKMMPWL (146 aa)) form the KARI C-terminal knotted domain. Mg(2+)-binding residues include Asp191, Glu195, Glu227, and Glu231. Ser252 contributes to the substrate binding site.

This sequence belongs to the ketol-acid reductoisomerase family. It depends on Mg(2+) as a cofactor.

It carries out the reaction (2R)-2,3-dihydroxy-3-methylbutanoate + NADP(+) = (2S)-2-acetolactate + NADPH + H(+). The catalysed reaction is (2R,3R)-2,3-dihydroxy-3-methylpentanoate + NADP(+) = (S)-2-ethyl-2-hydroxy-3-oxobutanoate + NADPH + H(+). It participates in amino-acid biosynthesis; L-isoleucine biosynthesis; L-isoleucine from 2-oxobutanoate: step 2/4. The protein operates within amino-acid biosynthesis; L-valine biosynthesis; L-valine from pyruvate: step 2/4. In terms of biological role, involved in the biosynthesis of branched-chain amino acids (BCAA). Catalyzes an alkyl-migration followed by a ketol-acid reduction of (S)-2-acetolactate (S2AL) to yield (R)-2,3-dihydroxy-isovalerate. In the isomerase reaction, S2AL is rearranged via a Mg-dependent methyl migration to produce 3-hydroxy-3-methyl-2-ketobutyrate (HMKB). In the reductase reaction, this 2-ketoacid undergoes a metal-dependent reduction by NADPH to yield (R)-2,3-dihydroxy-isovalerate. This Thermotoga maritima (strain ATCC 43589 / DSM 3109 / JCM 10099 / NBRC 100826 / MSB8) protein is Ketol-acid reductoisomerase (NADP(+)).